The chain runs to 347 residues: Merozoite surface protein P12 (347 aa).

Residues Met-1–Gly-25 form the signal peptide. 6-Cys domains lie at Lys-27–Leu-172 and Lys-175–Ser-305. Asn-28 carries N-linked (GlcNAc...) asparagine glycosylation. 3 disulfides stabilise this stretch: Cys-31–Cys-53, Cys-67–Cys-138, and Cys-81–Cys-136. Asn-147, Asn-200, Asn-228, Asn-242, Asn-265, and Asn-322 each carry an N-linked (GlcNAc...) asparagine glycan. Disulfide bonds link Cys-179-Cys-211, Cys-225-Cys-286, and Cys-236-Cys-284. Asn-322 carries the GPI-anchor amidated asparagine lipid modification. Positions Ser-323–Leu-347 are cleaved as a propeptide — removed in mature form.

Heterodimer; heterodimerizes with PF41. May form an antiparallel heterodimer with PF41. Post-translationally, processed into a soluble form.

The protein resides in the cell surface. It localises to the cell membrane. This is Merozoite surface protein P12 (PF12) from Plasmodium falciparum (isolate 3D7).